The following is a 234-amino-acid chain: Purine nucleoside phosphorylase DeoD-type (234 aa).

H4 serves as a coordination point for a purine D-ribonucleoside. Phosphate is bound by residues G20, R24, R43, and 87 to 90 (RIGS). A purine D-ribonucleoside-binding positions include E162, 179 to 181 (EME), and 203 to 204 (SD). D204 serves as the catalytic Proton donor.

It belongs to the PNP/UDP phosphorylase family. Homohexamer; trimer of homodimers.

It carries out the reaction a purine D-ribonucleoside + phosphate = a purine nucleobase + alpha-D-ribose 1-phosphate. The catalysed reaction is a purine 2'-deoxy-D-ribonucleoside + phosphate = a purine nucleobase + 2-deoxy-alpha-D-ribose 1-phosphate. In terms of biological role, catalyzes the reversible phosphorolytic breakdown of the N-glycosidic bond in the beta-(deoxy)ribonucleoside molecules, with the formation of the corresponding free purine bases and pentose-1-phosphate. In Roseobacter denitrificans (strain ATCC 33942 / OCh 114) (Erythrobacter sp. (strain OCh 114)), this protein is Purine nucleoside phosphorylase DeoD-type.